The following is a 308-amino-acid chain: uncharacterized protein (308 aa).

Helical transmembrane passes span 6–26 (VVLIVLILVLVGYFSKIFGIL), 31–51 (AKILNNIVIYIAMPSTIFLTI), 63–83 (FLKLPVVIFLCCLFVGILAYL), 100–120 (ILVSMLGNTGFLGYPVALGMF), 128–148 (AIFCDLGGVFATMLLGTYVGI), 162–182 (MAKFPPLITGILSIILVFFGF), 195–215 (LNYLSSATVPLIMMSLGLSLS), 221–241 (FGVFWGIIASIFRFIVSPATA), 257–277 (VLLVESSMPSAMMTLVLGTLY), and 287–307 (SIFITTTFSLLVIALWGWILL).

This sequence belongs to the auxin efflux carrier (TC 2.A.69) family.

The protein resides in the cell membrane. This is an uncharacterized protein from Methanocaldococcus jannaschii (strain ATCC 43067 / DSM 2661 / JAL-1 / JCM 10045 / NBRC 100440) (Methanococcus jannaschii).